The sequence spans 526 residues: MTYLLNERICALFRSNWQHTLTYWSVFFSFGLCVAFLGPTILDLRCQTQSTLQEITLVFFSQQFFLFLGSTIGGFFSKTLVSSLSSLAVSTLIISVVFAIIPLCRELLMLAFAMAVSGLAMGTIDTISNLQLVKIYQKDSTVFLQALHFFVGLGALVSPLIADPFLSDTSCVIGNSSVNTTSLEDLRNKLAGRHVHNVSNVHLHTDGEVVTNVSYAFWIMAIINLPVPIAIFVLVYRERLFMCGSDPSRRLLDGDVLAIKPRGTSILAEDTGQKETSNSHADLFSCCLLGKAHSFPLSFFGIHVLGGLVLFFSDGIVGSYTGFVYTYAVAPPMNLPHKTAGYLTCIFWAAITTGRLSAIPLSYRFKPVRLLIVSQVGVIVTVLLLLIFSNSSVFLFIGTCCLGLFISSIFPCMLALTEDILEYKGCATTVLVTSAGMGEMVLQVLVGSVMHSRGSFSFLLCGMIFGCLGFTFFTFLYFVQQSHKSYTEALPGNSPVERHEENGIKTCSAAVLNSWDAPEHKTSLDP.

Helical transmembrane passes span 21 to 41 (LTYW…GPTI), 55 to 75 (ITLV…IGGF), 84 to 104 (LSSL…IPLC), 107 to 127 (LLML…IDTI), 142 to 162 (VFLQ…PLIA), 215 to 235 (YAFW…FVLV), 297 to 317 (LSFF…DGIV), 341 to 361 (GYLT…AIPL), 377 to 397 (GVIV…FLFI), 401 to 421 (CLGL…EDIL), 430 to 450 (VLVT…GSVM), and 458 to 478 (FLLC…FLYF).

The protein belongs to the major facilitator superfamily.

The protein localises to the membrane. The chain is Major facilitator superfamily domain-containing protein 4A (mfsd4a) from Danio rerio (Zebrafish).